The primary structure comprises 600 residues: Elongation factor 4 (600 aa).

Positions 6–188 (KLIRNFSIIA…AVVERIPAPK (183 aa)) constitute a tr-type G domain. GTP-binding positions include 18-23 (DHGKST) and 135-138 (NKID).

Belongs to the TRAFAC class translation factor GTPase superfamily. Classic translation factor GTPase family. LepA subfamily.

The protein localises to the cell inner membrane. The enzyme catalyses GTP + H2O = GDP + phosphate + H(+). Required for accurate and efficient protein synthesis under certain stress conditions. May act as a fidelity factor of the translation reaction, by catalyzing a one-codon backward translocation of tRNAs on improperly translocated ribosomes. Back-translocation proceeds from a post-translocation (POST) complex to a pre-translocation (PRE) complex, thus giving elongation factor G a second chance to translocate the tRNAs correctly. Binds to ribosomes in a GTP-dependent manner. The chain is Elongation factor 4 from Sorangium cellulosum (strain So ce56) (Polyangium cellulosum (strain So ce56)).